The following is a 256-amino-acid chain: Ribonuclease HII (256 aa).

The RNase H type-2 domain maps to 72-256 (QYIAGMDEVG…SFNPVPKYLN (185 aa)). 3 residues coordinate a divalent metal cation: D78, E79, and D170.

It belongs to the RNase HII family. The cofactor is Mn(2+). It depends on Mg(2+) as a cofactor.

The protein localises to the cytoplasm. It carries out the reaction Endonucleolytic cleavage to 5'-phosphomonoester.. Functionally, endonuclease that specifically degrades the RNA of RNA-DNA hybrids. The chain is Ribonuclease HII from Limosilactobacillus reuteri (strain DSM 20016) (Lactobacillus reuteri).